Reading from the N-terminus, the 177-residue chain is Dual-action ribosomal maturation protein DarP (177 aa).

The segment at 1–26 (MKIVGDSEHFKQPYDSDEEYVSKTED) is disordered.

This sequence belongs to the DarP family.

The protein localises to the cytoplasm. In terms of biological role, member of a network of 50S ribosomal subunit biogenesis factors which assembles along the 30S-50S interface, preventing incorrect 23S rRNA structures from forming. Promotes peptidyl transferase center (PTC) maturation. This is Dual-action ribosomal maturation protein DarP from Shewanella sp. (strain MR-4).